Reading from the N-terminus, the 490-residue chain is MRGSWPRLGFPALLLLLHLLTGSDAAVRNGTAKREIGDSRGSSGTCVKGFLQEILPLPATCPPEVLGMRGAVYILYDVNISEGFNLRRDVYIRMAVFVRRLQRRRRFRHVRLVLPPWPRLYHWHSQGLQQSGLPWSHFFDLASLRRYAPVLDYEEFLAEQRLFGNPGAPLVHVGHAFRLQHYEVMLEQGIFRDKFERVTDKPCSEGSLSGGPLLQQAELRVGRFHCVRFQGSAGLLEKLLREAIDEDTAGPEDVDDMRTYALLSAETVLHDHWGDEHFWQARRSMRFARRLEQVAADFRRQALDTTDASAGVQRPAMWELERPKRNAKGGDYLCAHLRRGDFVRSRDATTPTLKAAAQQVKQLLRGFNMTTVFLATDATPYELMELKELFYRFRLVHFAPESNVQRRELKDGGVAVVDQLVCAYARYFVGTYESTFTYRIYEEREILGFTQASTFNTFCKALGGSCSRNAVWPIVWADGDSDSEEDSDPY.

A signal peptide spans 1 to 25 (MRGSWPRLGFPALLLLLHLLTGSDA). N-linked (GlcNAc...) asparagine glycans are attached at residues Asn29 and Asn79. 81–85 (SEGFN) contacts GDP-beta-L-fucose. The Proton acceptor role is filled by Glu82. An intrachain disulfide couples Cys203 to Cys226. A GDP-beta-L-fucose-binding site is contributed by 336 to 338 (HLR). N-linked (GlcNAc...) asparagine glycosylation occurs at Asn368. GDP-beta-L-fucose contacts are provided by residues Asp418 and 435–436 (TF). A disulfide bridge connects residues Cys459 and Cys466.

The protein belongs to the glycosyltransferase 68 family.

It is found in the endoplasmic reticulum. Its subcellular location is the golgi apparatus. The enzyme catalyses L-seryl-[protein] + GDP-beta-L-fucose = 3-O-(alpha-L-fucosyl)-L-seryl-[protein] + GDP + H(+). The catalysed reaction is L-threonyl-[protein] + GDP-beta-L-fucose = 3-O-(alpha-L-fucosyl)-L-threonyl-[protein] + GDP + H(+). It participates in protein modification; protein glycosylation. Does not require divalent metal ions for optimal activity. Functionally, catalyzes the reaction that attaches fucose through an O-glycosidic linkage to a conserved serine or threonine residue in the consensus sequence C1-X-X-S/T-C2 of thrombospondin type I repeats (TSRs) where C1 and C2 are the first and second cysteines of the repeat, respectively. O-fucosylates members of several protein families including the ADAMTS, the thrombospondin (TSP) and spondin families. This Drosophila melanogaster (Fruit fly) protein is GDP-fucose protein O-fucosyltransferase 2.